The following is a 428-amino-acid chain: Histidine--tRNA ligase (428 aa).

The protein belongs to the class-II aminoacyl-tRNA synthetase family. Homodimer.

The protein resides in the cytoplasm. The catalysed reaction is tRNA(His) + L-histidine + ATP = L-histidyl-tRNA(His) + AMP + diphosphate + H(+). The protein is Histidine--tRNA ligase of Buchnera aphidicola subsp. Schizaphis graminum (strain Sg).